Here is a 355-residue protein sequence, read N- to C-terminus: NADH dehydrogenase-like protein YutJ (355 aa).

It belongs to the NADH dehydrogenase family. FAD serves as cofactor.

The protein is NADH dehydrogenase-like protein YutJ (yutJ) of Bacillus subtilis (strain 168).